The chain runs to 136 residues: Invertebrate-type lysozyme (136 aa).

A signal peptide spans 1 to 11; that stretch reads METVSVEEGLD. Residues 14–130 enclose the I-type lysozyme domain; that stretch reads PGMVSQKCLL…WELLQKIPGC (117 aa). Intrachain disulfides connect C21–C98, C24–C130, C26–C33, C38–C47, C60–C80, C70–C76, and C94–C112. E29 functions as the Proton donor in the catalytic mechanism. D41 serves as the catalytic Nucleophile. A substrate-binding site is contributed by 53-59; that stretch reads KQPYWID. The N-linked (GlcNAc...) asparagine glycan is linked to N75. Substrate is bound by residues Y84, Y92, 105 to 107, and K119; that span reads HNG.

As to quaternary structure, homodimer in its autoinhibited state. Active as monomer.

It localises to the secreted. It catalyses the reaction Hydrolysis of (1-&gt;4)-beta-linkages between N-acetylmuramic acid and N-acetyl-D-glucosamine residues in a peptidoglycan and between N-acetyl-D-glucosamine residues in chitodextrins.. With respect to regulation, chitinase activity is activated by high salt concentrations which cause the release of the monomer from the autoinhibited homodimer. In terms of biological role, bacteriolytic activity against Gram-positive bacterium M.luteus and thereby probably protects against bacterial infection. Also has chitinase activity. May act as an ispopeptidase, cleaving isopeptide bonds between the side chains of Lys and Gln residues in proteins or in the cross-linking peptide of peptidoglycan in bacterial cell walls. The sequence is that of Invertebrate-type lysozyme from Ruditapes philippinarum (Japanese carpet shell).